The chain runs to 113 residues: Large ribosomal subunit protein uL22 (113 aa).

This sequence belongs to the universal ribosomal protein uL22 family. Part of the 50S ribosomal subunit.

In terms of biological role, this protein binds specifically to 23S rRNA; its binding is stimulated by other ribosomal proteins, e.g. L4, L17, and L20. It is important during the early stages of 50S assembly. It makes multiple contacts with different domains of the 23S rRNA in the assembled 50S subunit and ribosome. The globular domain of the protein is located near the polypeptide exit tunnel on the outside of the subunit, while an extended beta-hairpin is found that lines the wall of the exit tunnel in the center of the 70S ribosome. The polypeptide is Large ribosomal subunit protein uL22 (Bacillus thuringiensis subsp. konkukian (strain 97-27)).